A 214-amino-acid chain; its full sequence is Thymidylate kinase (214 aa).

Position 10-17 (10-17 (GGEGAGKS)) interacts with ATP.

Belongs to the thymidylate kinase family.

The enzyme catalyses dTMP + ATP = dTDP + ADP. Phosphorylation of dTMP to form dTDP in both de novo and salvage pathways of dTTP synthesis. This chain is Thymidylate kinase, found in Brucella suis (strain ATCC 23445 / NCTC 10510).